The chain runs to 643 residues: Asparagine synthetase domain-containing protein 1 (643 aa).

Cys2 serves as the catalytic For GATase activity. The 183-residue stretch at 2-184 (CGICCSVNFS…ASGLFRIDLK (183 aa)) folds into the Glutamine amidotransferase type-2 domain. Positions 285–601 (QFIDVLSVAV…GLTASALLPK (317 aa)) constitute an Asparagine synthetase domain.

This chain is Asparagine synthetase domain-containing protein 1 (ASNSD1), found in Homo sapiens (Human).